Here is a 140-residue protein sequence, read N- to C-terminus: Large ribosomal subunit protein uL11 (140 aa).

The protein belongs to the universal ribosomal protein uL11 family. In terms of assembly, part of the ribosomal stalk of the 50S ribosomal subunit. Interacts with L10 and the large rRNA to form the base of the stalk. L10 forms an elongated spine to which L12 dimers bind in a sequential fashion forming a multimeric L10(L12)X complex. One or more lysine residues are methylated.

Its function is as follows. Forms part of the ribosomal stalk which helps the ribosome interact with GTP-bound translation factors. The chain is Large ribosomal subunit protein uL11 from Campylobacter hominis (strain ATCC BAA-381 / DSM 21671 / CCUG 45161 / LMG 19568 / NCTC 13146 / CH001A).